An 856-amino-acid chain; its full sequence is DNA mismatch repair protein MutS (856 aa).

Residue 600–607 (GPNMSGKS) participates in ATP binding.

It belongs to the DNA mismatch repair MutS family.

In terms of biological role, this protein is involved in the repair of mismatches in DNA. It is possible that it carries out the mismatch recognition step. This protein has a weak ATPase activity. The polypeptide is DNA mismatch repair protein MutS (Lactobacillus acidophilus (strain ATCC 700396 / NCK56 / N2 / NCFM)).